The primary structure comprises 552 residues: Undecaprenyl phosphate-alpha-4-amino-4-deoxy-L-arabinose arabinosyl transferase (552 aa).

The next 11 helical transmembrane spans lie at 4-24 (IAGW…PLPG), 81-101 (FAVR…VFWL), 113-133 (VVAV…SYAV), 176-196 (FMTK…PWVI), 207-227 (FGPL…LAIA), 255-275 (APFW…LGLL), 289-309 (QGGD…FSIA), 313-333 (LPTY…GYVQ), 351-371 (LLVG…WGIT), 384-404 (VILG…SLYH), and 411-431 (WSAA…PQQV).

The protein belongs to the glycosyltransferase 83 family.

It localises to the cell inner membrane. The catalysed reaction is 4-amino-4-deoxy-alpha-L-arabinopyranosyl di-trans,octa-cis-undecaprenyl phosphate + lipid IVA = lipid IIA + di-trans,octa-cis-undecaprenyl phosphate.. It functions in the pathway lipopolysaccharide metabolism; 4-amino-4-deoxy-beta-L-arabinose-lipid A biosynthesis. Catalyzes the transfer of the L-Ara4N moiety of the glycolipid undecaprenyl phosphate-alpha-L-Ara4N to lipid A. The modified arabinose is attached to lipid A and is required for resistance to polymyxin and cationic antimicrobial peptides. The chain is Undecaprenyl phosphate-alpha-4-amino-4-deoxy-L-arabinose arabinosyl transferase from Edwardsiella ictaluri (strain 93-146).